Consider the following 523-residue polypeptide: Katanin p60 ATPase-containing subunit A1 (523 aa).

The segment at 82 to 215 (KEAPTGRRAA…DGKSKRGLYE (134 aa)) is disordered. Residues 178 to 194 (AGARSSTAGKKGAASKS) are compositionally biased toward low complexity. Residue 279 to 286 (GPPGTGKT) coordinates ATP.

Belongs to the AAA ATPase family. Katanin p60 subunit A1 subfamily. May homooligomerize. Component of KTN80-KTN1 complexes composed of a hexamer of KTN1-KTN80 heterodimers that sense microtubule (MT) geometry to confer precise MT severing. Interacts directly with KTN80.1, KTN80.2, KTN80.3 and KTN80.4. Can interact with KTN80.1. May interact with the kinesin related protein KIN14A. Interacts with microtubule polymers. Binds to IPGA1. Expressed ubiquitously, including siliques, flowers, leaves, stems and roots.

It localises to the cytoplasm. The protein localises to the cytoskeleton. The enzyme catalyses n ATP + n H2O + a microtubule = n ADP + n phosphate + (n+1) alpha/beta tubulin heterodimers.. In terms of biological role, severs microtubules in vitro in an ATP-dependent manner. Required for oligomerization of functional KTN80-KTN1 complexes that catalyze microtubule severing. This activity may promote rapid reorganization of cellular microtubule arrays. May be required for reorientation of cortical microtubule arrays during cellular elongation. Failure to correctly orient these arrays drastically compromises fiber length, cell wall thickness and mechanical strength. May also be required for the spatial organization of developmental cues within the root. Involved in the IPGA1- and AN-dependent regulation of pavement cells morphogenesis leading to puzzle shape. The sequence is that of Katanin p60 ATPase-containing subunit A1 from Arabidopsis thaliana (Mouse-ear cress).